The sequence spans 1169 residues: Rabankyrin-5 (1169 aa).

Alanine 2 bears the N-acetylalanine mark. A BTB domain is found at 68-130 (SDLKIKVGDR…IYTDELEFRE (63 aa)). ANK repeat units follow at residues 217-247 (KTEYPLHKAIKVEREDVVFLYLIEMDSQLPG), 255-284 (NGDLALDLALSRRLESIATTLVSHKADVDM), 288-317 (SGWSLLHKGIQRGDLFAATFLIKNGAFVNA), 322-362 (AQET…NPNM), and 366-396 (KGRTPLHVSIMAGNEYVFSQLLQCKQLDLEL). At serine 270 the chain carries Phosphoserine. The NPF signature appears at 421-423 (NPF). ANK repeat units lie at residues 490-519 (WGETPLHTACRHGLANLTAELLQQGANPNL), 542-572 (HLQTPLHMAIAYNHPDVVSVILEQKANALHA), 588-617 (RDQTVLGLALWTGMHTIAAQLLGSGAAIND), 621-650 (DGQTLLHMAIQRQDSKSALFLLEHQADINV), 654-683 (DGETALQLAIRNQLPLVVDAICTRGADMSV), 687-716 (KGNPPLWLALANNLEDIASTLVRHGCDATC), 724-753 (CLQTLLHRAIDENNEPTACFLIRSGCDVNS), 769-798 (DGQTPLHLAASWGLEETVQCLLEFGANVNA), 802-832 (EGRTPIHVAISSQHGVIIQLLVSHPDIHLNV), 836-865 (QGLTPFACAMTFKNNKSAEAILKRESGAAE), 870-899 (KGRNFLHVAVQNSDIESVLFLISVHANVNS), 905-934 (SKLTPLHLAVQAGSEIIVRNLLLAGAKVNE), 938-967 (HRQTALHLAAQQDLPTICSVLLENGVDFAA), 971-1001 (NGNNALHLAVMHGRLNNIRVLLTECTVDAEA), 1005-1037 (RGQSPLHILGQYGKENAAAIFDLFLECMPGYPL), and 1043-1072 (DGSTVLLLAYMKGNANLCRAIVRSGARLGV). The interval 650-759 (VRTQDGETAL…DVNSPRQPGA (110 aa)) is interaction with RHOD and RAB5A. The FYVE-type zinc finger occupies 1104–1164 (WCDGSYCYEC…VCNICFDVLT (61 aa)). Zn(2+)-binding residues include cysteine 1110, cysteine 1113, cysteine 1126, cysteine 1129, cysteine 1134, cysteine 1137, cysteine 1156, and cysteine 1159.

As to quaternary structure, interacts with RAB5A (in GTP-bound form). Interacts with RHOD (independent of GTP-loaded status). Interacts with EHD1. Interacts with VPS26A; the interaction is independent of EHD1 and is indicative for an association with the cargo recognition subcomplex of the retromer complex. As to expression, high expression in whole adult brain and intermediate expression in all other tissues and specific brain regions examined, including fetal brain.

Its subcellular location is the cytoplasm. The protein resides in the endosome membrane. It localises to the early endosome. In terms of biological role, proposed effector of Rab5. Binds to phosphatidylinositol 3-phosphate (PI(3)P). Involved in homotypic early endosome fusion and to a lesser extent in heterotypic fusion of chlathrin-coated vesicles with early endosomes. Involved in macropinocytosis; the function is dependent on Rab5-GTP. Required for correct endosomal localization. Involved in the internalization and trafficking of activated tyrosine kinase receptors such as PDGFRB. Regulates the subcellular localization of the retromer complex in a EHD1-dependent manner. Involved in endosome-to-Golgi transport and biosynthetic transport to late endosomes and lysosomes indicative for a regulation of retromer complex-mediated retrograde transport. This is Rabankyrin-5 (ANKFY1) from Homo sapiens (Human).